Consider the following 717-residue polypeptide: Delta-1-pyrroline-5-carboxylate synthase (717 aa).

The tract at residues 1–296 (MDAVDSTRAF…WAPVGDVGAR (296 aa)) is glutamate 5-kinase. Ser60, Asp157, and Asn176 together coordinate substrate. ATP-binding positions include 196-197 (SD) and 236-242 (RGGMTAK). The gamma-glutamyl phosphate reductase stretch occupies residues 297 to 717 (DMAVAARESS…YTHKDLTSHA (421 aa)).

This sequence in the N-terminal section; belongs to the glutamate 5-kinase family. It in the C-terminal section; belongs to the gamma-glutamyl phosphate reductase family. In terms of tissue distribution, expressed at high levels in leaves and is inducible in roots subjected to salt stress.

The enzyme catalyses L-glutamate + ATP = L-glutamyl 5-phosphate + ADP. It carries out the reaction L-glutamate 5-semialdehyde + phosphate + NADP(+) = L-glutamyl 5-phosphate + NADPH + H(+). It participates in amino-acid biosynthesis; L-proline biosynthesis; L-glutamate 5-semialdehyde from L-glutamate: step 1/2. The protein operates within amino-acid biosynthesis; L-proline biosynthesis; L-glutamate 5-semialdehyde from L-glutamate: step 2/2. Its activity is regulated as follows. Feedback regulated by proline. P5CS plays a key role in proline biosynthesis, leading to osmoregulation in plants. The chain is Delta-1-pyrroline-5-carboxylate synthase from Actinidia deliciosa (Kiwi).